Here is a 76-residue protein sequence, read N- to C-terminus: Small ribosomal subunit protein bS18 (76 aa).

This sequence belongs to the bacterial ribosomal protein bS18 family. In terms of assembly, part of the 30S ribosomal subunit. Forms a tight heterodimer with protein bS6.

Its function is as follows. Binds as a heterodimer with protein bS6 to the central domain of the 16S rRNA, where it helps stabilize the platform of the 30S subunit. The polypeptide is Small ribosomal subunit protein bS18 (Stenotrophomonas maltophilia (strain R551-3)).